Reading from the N-terminus, the 218-residue chain is Small ribosomal subunit protein uS3c (218 aa).

The 76-residue stretch at 43–118 (IKNYVQKNTR…KLNIAITRIG (76 aa)) folds into the KH type-2 domain.

It belongs to the universal ribosomal protein uS3 family. In terms of assembly, part of the 30S ribosomal subunit.

It localises to the plastid. It is found in the chloroplast. This Gossypium barbadense (Sea Island cotton) protein is Small ribosomal subunit protein uS3c (rps3).